We begin with the raw amino-acid sequence, 168 residues long: Putative B3 domain-containing protein Os10g0158600 (168 aa).

Residues 4–97 (VVFASARLNA…KARVMLLNRQ (94 aa)) constitute a DNA-binding region (TF-B3). Residues 105–151 (KTPSTTSSDKNRSLSPSDQLTRASTSAHPSTSKSIPPLRNGTGSTKR) form a disordered region. A compositionally biased stretch (polar residues) spans 106-138 (TPSTTSSDKNRSLSPSDQLTRASTSAHPSTSKS).

The protein resides in the nucleus. The polypeptide is Putative B3 domain-containing protein Os10g0158600 (Oryza sativa subsp. japonica (Rice)).